We begin with the raw amino-acid sequence, 79 residues long: Putative transmembrane protein ORF17 (79 aa).

2 helical membrane passes run 8 to 28 and 50 to 70; these read LMIY…IMYY and VFVM…TTTI.

It is found in the host membrane. The chain is Putative transmembrane protein ORF17 from Haloarcula hispanica (His1V).